A 304-amino-acid chain; its full sequence is Phosphatidylglycerol--prolipoprotein diacylglyceryl transferase (304 aa).

Helical transmembrane passes span 18 to 38 (LGPF…LIGL), 58 to 78 (LLPI…VAFE), 106 to 126 (IWGG…AVLI), and 133 to 153 (QAFW…QAIG). A 1,2-diacyl-sn-glycero-3-phospho-(1'-sn-glycerol) is bound at residue Arg-154. Helical transmembrane passes span 195–215 (PTFL…IVLF), 221–241 (GLLK…YSLG), and 268–288 (IAQL…WWLY).

This sequence belongs to the Lgt family.

It is found in the cell inner membrane. The enzyme catalyses L-cysteinyl-[prolipoprotein] + a 1,2-diacyl-sn-glycero-3-phospho-(1'-sn-glycerol) = an S-1,2-diacyl-sn-glyceryl-L-cysteinyl-[prolipoprotein] + sn-glycerol 1-phosphate + H(+). It functions in the pathway protein modification; lipoprotein biosynthesis (diacylglyceryl transfer). In terms of biological role, catalyzes the transfer of the diacylglyceryl group from phosphatidylglycerol to the sulfhydryl group of the N-terminal cysteine of a prolipoprotein, the first step in the formation of mature lipoproteins. This chain is Phosphatidylglycerol--prolipoprotein diacylglyceryl transferase, found in Prochlorococcus marinus (strain MIT 9303).